Consider the following 390-residue polypeptide: Flap endonuclease 1 (390 aa).

An N-domain region spans residues 1–111 (MGIKGLAKLL…GELLKRREKR (111 aa)). Asp34 provides a ligand contact to Mg(2+). DNA is bound by residues Arg47 and Arg77. Mg(2+)-binding residues include Asp93, Glu165, Glu167, Asp186, and Asp188. The segment at 129–260 (EQDKQSKRLV…KTALKLIREH (132 aa)) is I-domain. Glu165 serves as a coordination point for DNA. DNA is bound by residues Gly238 and Asp240. Asp240 provides a ligand contact to Mg(2+). The tract at residues 342-390 (KPQSRMDSFFKVKANPEGDKKKAEKRKAELAASRGKGKKGKGGGGFKKK) is disordered. An interaction with PCNA region spans residues 343–351 (PQSRMDSFF). The segment covering 349-370 (SFFKVKANPEGDKKKAEKRKAE) has biased composition (basic and acidic residues). The segment covering 376–390 (GKGKKGKGGGGFKKK) has biased composition (basic residues).

Belongs to the XPG/RAD2 endonuclease family. FEN1 subfamily. Interacts with PCNA. Three molecules of FEN1 bind to one PCNA trimer with each molecule binding to one PCNA monomer. PCNA stimulates the nuclease activity without altering cleavage specificity. Mg(2+) is required as a cofactor. In terms of processing, phosphorylated. Phosphorylation upon DNA damage induces relocalization to the nuclear plasma.

The protein localises to the nucleus. The protein resides in the nucleolus. It localises to the nucleoplasm. Its subcellular location is the mitochondrion. In terms of biological role, structure-specific nuclease with 5'-flap endonuclease and 5'-3' exonuclease activities involved in DNA replication and repair. During DNA replication, cleaves the 5'-overhanging flap structure that is generated by displacement synthesis when DNA polymerase encounters the 5'-end of a downstream Okazaki fragment. It enters the flap from the 5'-end and then tracks to cleave the flap base, leaving a nick for ligation. Also involved in the long patch base excision repair (LP-BER) pathway, by cleaving within the apurinic/apyrimidinic (AP) site-terminated flap. Acts as a genome stabilization factor that prevents flaps from equilibrating into structures that lead to duplications and deletions. Also possesses 5'-3' exonuclease activity on nicked or gapped double-stranded DNA, and exhibits RNase H activity. Also involved in replication and repair of rDNA and in repairing mitochondrial DNA. The sequence is that of Flap endonuclease 1 from Thalassiosira pseudonana (Marine diatom).